The primary structure comprises 89 residues: Small ribosomal subunit protein uS15 (89 aa).

Belongs to the universal ribosomal protein uS15 family. In terms of assembly, part of the 30S ribosomal subunit. Forms a bridge to the 50S subunit in the 70S ribosome, contacting the 23S rRNA.

One of the primary rRNA binding proteins, it binds directly to 16S rRNA where it helps nucleate assembly of the platform of the 30S subunit by binding and bridging several RNA helices of the 16S rRNA. Functionally, forms an intersubunit bridge (bridge B4) with the 23S rRNA of the 50S subunit in the ribosome. This Ectopseudomonas mendocina (strain ymp) (Pseudomonas mendocina) protein is Small ribosomal subunit protein uS15.